Here is a 191-residue protein sequence, read N- to C-terminus: Sec-independent protein translocase protein TatB (191 aa).

A helical transmembrane segment spans residues 1-21; sequence MFDIGFSELFLILVIGLLVLG. Over residues 119 to 138 the composition is skewed to polar residues; it reads ESTSQTLTEQLTPSEQVTEA. Disordered regions lie at residues 119–139 and 168–191; these read ESTS…TEAT and DDDD…DKKA. Over residues 181-191 the composition is skewed to basic and acidic residues; that stretch reads PQTEEIQDKKA.

The protein belongs to the TatB family. In terms of assembly, the Tat system comprises two distinct complexes: a TatABC complex, containing multiple copies of TatA, TatB and TatC subunits, and a separate TatA complex, containing only TatA subunits. Substrates initially bind to the TatABC complex, which probably triggers association of the separate TatA complex to form the active translocon.

The protein localises to the cell inner membrane. Functionally, part of the twin-arginine translocation (Tat) system that transports large folded proteins containing a characteristic twin-arginine motif in their signal peptide across membranes. Together with TatC, TatB is part of a receptor directly interacting with Tat signal peptides. TatB may form an oligomeric binding site that transiently accommodates folded Tat precursor proteins before their translocation. The chain is Sec-independent protein translocase protein TatB from Pasteurella multocida (strain Pm70).